The primary structure comprises 858 residues: Bifunctional uridylyltransferase/uridylyl-removing enzyme (858 aa).

The interval 1-324 (MSASVAEPPP…PATSGVTRVL (324 aa)) is uridylyltransferase. The segment at 325–681 (SPGRFVEKQG…ARPSPVGDAL (357 aa)) is uridylyl-removing. The HD domain maps to 443-565 (VDQHILMVLR…VGSERRLTAL (123 aa)). ACT domains lie at 682 to 761 (QVLV…PEPS) and 790 to 858 (ILSV…AIAV).

Belongs to the GlnD family. Mg(2+) serves as cofactor.

The enzyme catalyses [protein-PII]-L-tyrosine + UTP = [protein-PII]-uridylyl-L-tyrosine + diphosphate. It carries out the reaction [protein-PII]-uridylyl-L-tyrosine + H2O = [protein-PII]-L-tyrosine + UMP + H(+). With respect to regulation, uridylyltransferase (UTase) activity is inhibited by glutamine, while glutamine activates uridylyl-removing (UR) activity. In terms of biological role, modifies, by uridylylation and deuridylylation, the PII regulatory proteins (GlnB and homologs), in response to the nitrogen status of the cell that GlnD senses through the glutamine level. Under low glutamine levels, catalyzes the conversion of the PII proteins and UTP to PII-UMP and PPi, while under higher glutamine levels, GlnD hydrolyzes PII-UMP to PII and UMP (deuridylylation). Thus, controls uridylylation state and activity of the PII proteins, and plays an important role in the regulation of nitrogen assimilation and metabolism. This Burkholderia pseudomallei (strain K96243) protein is Bifunctional uridylyltransferase/uridylyl-removing enzyme.